Reading from the N-terminus, the 272-residue chain is Shikimate dehydrogenase (NADP(+)) (272 aa).

Residues 14–16 (SKS) and Thr61 each bind shikimate. Catalysis depends on Lys65, which acts as the Proton acceptor. Shikimate-binding residues include Asn86 and Asp102. Residues 126-130 (GAGGA), 149-154 (NRTFSK), Ser189, and Met213 contribute to the NADP(+) site. Position 215 (Tyr215) interacts with shikimate. Residue Gly238 participates in NADP(+) binding.

It belongs to the shikimate dehydrogenase family. Homodimer.

It catalyses the reaction shikimate + NADP(+) = 3-dehydroshikimate + NADPH + H(+). The protein operates within metabolic intermediate biosynthesis; chorismate biosynthesis; chorismate from D-erythrose 4-phosphate and phosphoenolpyruvate: step 4/7. In terms of biological role, involved in the biosynthesis of the chorismate, which leads to the biosynthesis of aromatic amino acids. Catalyzes the reversible NADPH linked reduction of 3-dehydroshikimate (DHSA) to yield shikimate (SA). This chain is Shikimate dehydrogenase (NADP(+)), found in Haemophilus influenzae (strain ATCC 51907 / DSM 11121 / KW20 / Rd).